A 292-amino-acid polypeptide reads, in one-letter code: Ribosomal RNA small subunit methyltransferase H (292 aa).

Residues 32–34 (GGH), Asp-51, Leu-87, Asp-101, and Gln-108 contribute to the S-adenosyl-L-methionine site.

The protein belongs to the methyltransferase superfamily. RsmH family.

It localises to the cytoplasm. It catalyses the reaction cytidine(1402) in 16S rRNA + S-adenosyl-L-methionine = N(4)-methylcytidine(1402) in 16S rRNA + S-adenosyl-L-homocysteine + H(+). Specifically methylates the N4 position of cytidine in position 1402 (C1402) of 16S rRNA. The polypeptide is Ribosomal RNA small subunit methyltransferase H (Pseudothermotoga lettingae (strain ATCC BAA-301 / DSM 14385 / NBRC 107922 / TMO) (Thermotoga lettingae)).